A 115-amino-acid chain; its full sequence is Large ribosomal subunit protein bL20 (115 aa).

Belongs to the bacterial ribosomal protein bL20 family.

Binds directly to 23S ribosomal RNA and is necessary for the in vitro assembly process of the 50S ribosomal subunit. It is not involved in the protein synthesizing functions of that subunit. The protein is Large ribosomal subunit protein bL20 of Microcystis aeruginosa (strain NIES-843 / IAM M-2473).